The following is a 181-amino-acid chain: Large ribosomal subunit protein uL6 (181 aa).

Belongs to the universal ribosomal protein uL6 family. As to quaternary structure, part of the 50S ribosomal subunit.

In terms of biological role, this protein binds to the 23S rRNA, and is important in its secondary structure. It is located near the subunit interface in the base of the L7/L12 stalk, and near the tRNA binding site of the peptidyltransferase center. The polypeptide is Large ribosomal subunit protein uL6 (Saccharolobus solfataricus (strain ATCC 35092 / DSM 1617 / JCM 11322 / P2) (Sulfolobus solfataricus)).